Here is a 355-residue protein sequence, read N- to C-terminus: MSRTMVIMAGGTGGHVFPGLAVAHRLQADGWNIHWLGTPDRMEADLVPAHGFPIEFINIRGLRNHGLVRKLLAPFQICKAVLQAFMILRRIRPDVVLGMGGYAAGPGGVAAKLLGIPVVLHEQNAAAGLTNRLLAKIATRILMGFEGAFPLTERSRVVGNPVRDEFLQLAQKPLKKYHTGNPLKILIVGGSLGARPLNQIVPHALAKLNNIDVRHQSGKGNASAVSDLYQSLGVTTVTVTEFITDMAAAYEWADLLICRAGALTVAEVAAAGIPAVFVPLPHAVDDHQTRNAESLTRRGAAVLMPQKEMTADKLAELIAQWQVDPRQLQKIAQLSRAAAILDATDRVVSECKALI.

UDP-N-acetyl-alpha-D-glucosamine is bound by residues 12-14, N124, R163, S191, I243, 262-267, and Q288; these read TGG and ALTVAE.

Belongs to the glycosyltransferase 28 family. MurG subfamily.

Its subcellular location is the cell inner membrane. The enzyme catalyses di-trans,octa-cis-undecaprenyl diphospho-N-acetyl-alpha-D-muramoyl-L-alanyl-D-glutamyl-meso-2,6-diaminopimeloyl-D-alanyl-D-alanine + UDP-N-acetyl-alpha-D-glucosamine = di-trans,octa-cis-undecaprenyl diphospho-[N-acetyl-alpha-D-glucosaminyl-(1-&gt;4)]-N-acetyl-alpha-D-muramoyl-L-alanyl-D-glutamyl-meso-2,6-diaminopimeloyl-D-alanyl-D-alanine + UDP + H(+). Its pathway is cell wall biogenesis; peptidoglycan biosynthesis. Cell wall formation. Catalyzes the transfer of a GlcNAc subunit on undecaprenyl-pyrophosphoryl-MurNAc-pentapeptide (lipid intermediate I) to form undecaprenyl-pyrophosphoryl-MurNAc-(pentapeptide)GlcNAc (lipid intermediate II). The chain is UDP-N-acetylglucosamine--N-acetylmuramyl-(pentapeptide) pyrophosphoryl-undecaprenol N-acetylglucosamine transferase from Tolumonas auensis (strain DSM 9187 / NBRC 110442 / TA 4).